Here is a 507-residue protein sequence, read N- to C-terminus: Maturase K (507 aa).

It belongs to the intron maturase 2 family. MatK subfamily.

It localises to the plastid. The protein resides in the chloroplast. Its function is as follows. Usually encoded in the trnK tRNA gene intron. Probably assists in splicing its own and other chloroplast group II introns. In Magnolia figo (Banana shrub), this protein is Maturase K.